The sequence spans 132 residues: Ribosome-binding factor A (132 aa).

It belongs to the RbfA family. Monomer. Binds 30S ribosomal subunits, but not 50S ribosomal subunits or 70S ribosomes.

The protein resides in the cytoplasm. Its function is as follows. One of several proteins that assist in the late maturation steps of the functional core of the 30S ribosomal subunit. Associates with free 30S ribosomal subunits (but not with 30S subunits that are part of 70S ribosomes or polysomes). Required for efficient processing of 16S rRNA. May interact with the 5'-terminal helix region of 16S rRNA. The chain is Ribosome-binding factor A from Treponema denticola (strain ATCC 35405 / DSM 14222 / CIP 103919 / JCM 8153 / KCTC 15104).